The primary structure comprises 402 residues: Plasminogen activator inhibitor 1 (402 aa).

An N-terminal signal peptide occupies residues 1–23 (MRMSLVFACLAMGLALTFAEGSA). 3 N-linked (GlcNAc...) asparagine glycosylation sites follow: Asn232, Asn288, and Asn352.

The protein belongs to the serpin family. In terms of assembly, forms a heterodimer with TMPRSS7. Interacts with VTN. Binds LRP1B; binding is followed by internalization and degradation. Interacts with PPP1CB. In complex with PLAU/uPA, interacts with PLAUR/uPAR. Interacts with SORL1 and LRP1, either alone or in complex with PLAU; these interactions are abolished in the presence of LRPAP1/RAP. The ternary complex composed of PLAUR-PLAU-PAI1 also interacts with SORL1. Interacts with PLAT/tPA. Also interacts with SORL1, when complexed to PLAT/tPA.

The protein resides in the secreted. Its function is as follows. Serine protease inhibitor. Inhibits TMPRSS7. Is a primary inhibitor of tissue-type plasminogen activator (PLAT) and urokinase-type plasminogen activator (PLAU). As PLAT inhibitor, it is required for fibrinolysis down-regulation and is responsible for the controlled degradation of blood clots. As PLAU inhibitor, it is involved in the regulation of cell adhesion and spreading. Acts as a regulator of cell migration, independently of its role as protease inhibitor. It is required for stimulation of keratinocyte migration during cutaneous injury repair. It is involved in cellular and replicative senescence. Plays a role in alveolar type 2 cells senescence in the lung. Is involved in the regulation of cementogenic differentiation of periodontal ligament stem cells, and regulates odontoblast differentiation and dentin formation during odontogenesis. The chain is Plasminogen activator inhibitor 1 (SERPINE1) from Sus scrofa (Pig).